We begin with the raw amino-acid sequence, 335 residues long: Biotin synthase (335 aa).

The region spanning 46–274 (YNIQLASLFS…KSKIRLSAGR (229 aa)) is the Radical SAM core domain. Residues C61, C65, and C68 each coordinate [4Fe-4S] cluster. [2Fe-2S] cluster contacts are provided by C105, C137, C197, and R269.

Belongs to the radical SAM superfamily. Biotin synthase family. Homodimer. It depends on [4Fe-4S] cluster as a cofactor. The cofactor is [2Fe-2S] cluster.

The enzyme catalyses (4R,5S)-dethiobiotin + (sulfur carrier)-SH + 2 reduced [2Fe-2S]-[ferredoxin] + 2 S-adenosyl-L-methionine = (sulfur carrier)-H + biotin + 2 5'-deoxyadenosine + 2 L-methionine + 2 oxidized [2Fe-2S]-[ferredoxin]. It functions in the pathway cofactor biosynthesis; biotin biosynthesis; biotin from 7,8-diaminononanoate: step 2/2. Functionally, catalyzes the conversion of dethiobiotin (DTB) to biotin by the insertion of a sulfur atom into dethiobiotin via a radical-based mechanism. This Prochlorococcus marinus (strain MIT 9312) protein is Biotin synthase.